Consider the following 149-residue polypeptide: Transcriptional repressor NrdR (149 aa).

The segment at 3–34 (CPFCAAVDTKVIDSRLVGDGSQVRRRRQCLEC) is a zinc-finger region. Residues 49–139 (PRVIKSDDIR…VYRSFEDIRE (91 aa)) enclose the ATP-cone domain.

The protein belongs to the NrdR family. Requires Zn(2+) as cofactor.

Negatively regulates transcription of bacterial ribonucleotide reductase nrd genes and operons by binding to NrdR-boxes. This Photorhabdus laumondii subsp. laumondii (strain DSM 15139 / CIP 105565 / TT01) (Photorhabdus luminescens subsp. laumondii) protein is Transcriptional repressor NrdR.